Consider the following 387-residue polypeptide: NADPH-dependent aldehyde reductase YqhD (387 aa).

NADP(+)-binding residues include glycine 38, serine 40, asparagine 68, glycine 95, serine 96, aspartate 99, threonine 138, asparagine 147, glycine 149, lysine 160, tyrosine 179, and threonine 182. Residues aspartate 194, histidine 198, histidine 267, and histidine 281 each coordinate Zn(2+).

Belongs to the iron-containing alcohol dehydrogenase family. In terms of assembly, homodimer. The crystals contain two dimers in the asymmetric unit. Zn(2+) is required as a cofactor.

The catalysed reaction is a primary alcohol + NADP(+) = an aldehyde + NADPH + H(+). The enzyme catalyses butan-1-ol + NADP(+) = butanal + NADPH + H(+). It carries out the reaction 1-propanol + NADP(+) = propanal + NADPH + H(+). It catalyses the reaction allyl alcohol + NADP(+) = acrolein + NADPH + H(+). Its function is as follows. Exhibits NADPH-dependent reductase activity for a broad range of short-chain aldehydes. Shows highest catalytic efficiency toward butanal, propanal and the highly toxic aldehydes acrolein and malondialdehyde (MDA), which are produced mainly during lipid peroxidation. Mediates resistance to reactive oxygen species (ROS) elicitors, such as paraquat and potassium tellurite, probably by protecting the cell against the toxic effects of reactive aldehydes derived from membrane lipid peroxidation. Also acts, with lower efficiency, on acetaldehyde, glyceraldehyde, glycolaldehyde, methylglyoxal, glyoxal and hydroxyacetone. Could be involved in glyoxal metabolism, by catalyzing the reduction of glyoxal to glycolaldehyde, and further to 1,2-ethandiol. Catalyzes the reduction of isobutyraldehyde (2-methylpropanal) to isobutanol, and probably contributes to the production of isobutanol. Can probably catalyze the reduction of glutaraldehyde, a widely used biocide, to 1,5-pentanediol, which is non-toxic. Overexpression of YqhD protects the cells against glutaraldehyde toxicity. Can catalyze in vitro the NADPH-dependent reduction of furfural, a natural product of lignocellulosic decomposition, to the less toxic product, furfuryl alcohol. However, it is unlikely that furfural is a physiological substrate. In terms of biological role, in contrast, Sulzenbacher et al. detected significant activities only in the presence of alcohol and NADP(+). They reported in vitro NADP(+)-dependent alcohol dehydrogenase (ADH) activity towards various alcohols, with a preference for alcohols longer than C(3), but the affinity for the substrates is poor, suggesting that these compounds are not the physiological substrates. Perez et al. did not detect dehydrogenase activity with short and medium chain alcohols such as methanol, ethanol, propanol, butanol or isopropanol. This chain is NADPH-dependent aldehyde reductase YqhD (yqhD), found in Escherichia coli (strain K12).